The following is a 252-amino-acid chain: Zinc finger CCCH domain-containing protein 28 (252 aa).

Positions M1–P21 are enriched in basic and acidic residues. The segment at M1–D31 is disordered. C3H1-type zinc fingers lie at residues F71 to E99 and N143 to S171.

In Arabidopsis thaliana (Mouse-ear cress), this protein is Zinc finger CCCH domain-containing protein 28.